The following is a 178-amino-acid chain: Protein GrpE (178 aa).

Basic and acidic residues-rich tracts occupy residues 1–19 (MAKH…KEEA) and 30–42 (SPEK…ANER). Residues 1–42 (MAKHKQEEHPEDVEVKEEAVETAEQAESASPEKSELELANER) are disordered.

Belongs to the GrpE family. As to quaternary structure, homodimer.

Its subcellular location is the cytoplasm. In terms of biological role, participates actively in the response to hyperosmotic and heat shock by preventing the aggregation of stress-denatured proteins, in association with DnaK and GrpE. It is the nucleotide exchange factor for DnaK and may function as a thermosensor. Unfolded proteins bind initially to DnaJ; upon interaction with the DnaJ-bound protein, DnaK hydrolyzes its bound ATP, resulting in the formation of a stable complex. GrpE releases ADP from DnaK; ATP binding to DnaK triggers the release of the substrate protein, thus completing the reaction cycle. Several rounds of ATP-dependent interactions between DnaJ, DnaK and GrpE are required for fully efficient folding. This is Protein GrpE from Streptococcus sanguinis (strain SK36).